A 446-amino-acid polypeptide reads, in one-letter code: Methylenetetrahydrofolate--tRNA-(uracil-5-)-methyltransferase TrmFO (446 aa).

FAD is bound at residue 9–14 (GGGMAG).

This sequence belongs to the MnmG family. TrmFO subfamily. FAD is required as a cofactor.

It is found in the cytoplasm. The catalysed reaction is uridine(54) in tRNA + (6R)-5,10-methylene-5,6,7,8-tetrahydrofolate + NADH + H(+) = 5-methyluridine(54) in tRNA + (6S)-5,6,7,8-tetrahydrofolate + NAD(+). It catalyses the reaction uridine(54) in tRNA + (6R)-5,10-methylene-5,6,7,8-tetrahydrofolate + NADPH + H(+) = 5-methyluridine(54) in tRNA + (6S)-5,6,7,8-tetrahydrofolate + NADP(+). Functionally, catalyzes the folate-dependent formation of 5-methyl-uridine at position 54 (M-5-U54) in all tRNAs. This Ruegeria sp. (strain TM1040) (Silicibacter sp.) protein is Methylenetetrahydrofolate--tRNA-(uracil-5-)-methyltransferase TrmFO.